The chain runs to 305 residues: Ribosomal protein L11 methyltransferase (305 aa).

Thr149, Gly176, Asp198, and Asn240 together coordinate S-adenosyl-L-methionine.

This sequence belongs to the methyltransferase superfamily. PrmA family.

It localises to the cytoplasm. It carries out the reaction L-lysyl-[protein] + 3 S-adenosyl-L-methionine = N(6),N(6),N(6)-trimethyl-L-lysyl-[protein] + 3 S-adenosyl-L-homocysteine + 3 H(+). In terms of biological role, methylates ribosomal protein L11. The chain is Ribosomal protein L11 methyltransferase from Trichlorobacter lovleyi (strain ATCC BAA-1151 / DSM 17278 / SZ) (Geobacter lovleyi).